A 762-amino-acid chain; its full sequence is Homeobox-leucine zipper protein MERISTEM L1 (762 aa).

The segment at 13 to 72 is disordered; that stretch reads MFDMTPKNSENDLGITGSHEEDFETKSGAEVTMENPLEEELQDPNQRPNKKKRYHRHTQR. Residues 30-39 show a composition bias toward basic and acidic residues; that stretch reads SHEEDFETKS. Over residues 60 to 71 the composition is skewed to basic residues; the sequence is PNKKKRYHRHTQ. The segment at residues 62-121 is a DNA-binding region (homeobox); that stretch reads KKKRYHRHTQRQIQELESFFKECPHPDDKQRKELSRELSLEPLQVKFWFQNKRTQMKAQH. The stretch at 110 to 192 forms a coiled coil; the sequence is FQNKRTQMKA…DRISAIAAKY (83 aa). The START domain maps to 253–484; it reads SEADKPMIVE…LDRQCERLAS (232 aa).

The protein belongs to the HD-ZIP homeobox family. Class IV subfamily. Interacts with GAI/RGA2, RGA/RGA1/GRS, RGL2/SCL19 and PDF2. Interacts with AIL7/PLT7, ANT, BBM and AIL1.

The protein resides in the nucleus. In terms of biological role, probable transcription factor involved in cell specification and pattern formation during embryogenesis. Binds to the L1 box DNA sequence 5'-TAAATG[CT]A-3'. Plays a role in maintaining the identity of L1 cells, possibly by interacting with their L1 box or other target-gene promoters; binds to the LIP1 gene promoter and stimulates its expression upon imbibition. Acts as a positive regulator of gibberellins (GAs)-regulated epidermal gene expression (e.g. LIP1, LIP2, LTP1, FDH and PDF1). Functionally redundant to PDF2. Seems to promote cell differentiation. In Arabidopsis thaliana (Mouse-ear cress), this protein is Homeobox-leucine zipper protein MERISTEM L1.